An 871-amino-acid polypeptide reads, in one-letter code: Alanine--tRNA ligase (871 aa).

The Zn(2+) site is built by H563, H567, C665, and H669.

It belongs to the class-II aminoacyl-tRNA synthetase family. The cofactor is Zn(2+).

Its subcellular location is the cytoplasm. The catalysed reaction is tRNA(Ala) + L-alanine + ATP = L-alanyl-tRNA(Ala) + AMP + diphosphate. Functionally, catalyzes the attachment of alanine to tRNA(Ala) in a two-step reaction: alanine is first activated by ATP to form Ala-AMP and then transferred to the acceptor end of tRNA(Ala). Also edits incorrectly charged Ser-tRNA(Ala) and Gly-tRNA(Ala) via its editing domain. In Christiangramia forsetii (strain DSM 17595 / CGMCC 1.15422 / KT0803) (Gramella forsetii), this protein is Alanine--tRNA ligase.